Reading from the N-terminus, the 170-residue chain is ATP synthase subunit b (170 aa).

A helical transmembrane segment spans residues F30–P50.

Belongs to the ATPase B chain family. In terms of assembly, F-type ATPases have 2 components, F(1) - the catalytic core - and F(0) - the membrane proton channel. F(1) has five subunits: alpha(3), beta(3), gamma(1), delta(1), epsilon(1). F(0) has three main subunits: a(1), b(2) and c(10-14). The alpha and beta chains form an alternating ring which encloses part of the gamma chain. F(1) is attached to F(0) by a central stalk formed by the gamma and epsilon chains, while a peripheral stalk is formed by the delta and b chains.

It is found in the cell membrane. In terms of biological role, f(1)F(0) ATP synthase produces ATP from ADP in the presence of a proton or sodium gradient. F-type ATPases consist of two structural domains, F(1) containing the extramembraneous catalytic core and F(0) containing the membrane proton channel, linked together by a central stalk and a peripheral stalk. During catalysis, ATP synthesis in the catalytic domain of F(1) is coupled via a rotary mechanism of the central stalk subunits to proton translocation. Functionally, component of the F(0) channel, it forms part of the peripheral stalk, linking F(1) to F(0). This Mycobacterium ulcerans (strain Agy99) protein is ATP synthase subunit b.